Here is an 87-residue protein sequence, read N- to C-terminus: Large ribosomal subunit protein bL31B (87 aa).

This sequence belongs to the bacterial ribosomal protein bL31 family. Type B subfamily. In terms of assembly, part of the 50S ribosomal subunit.

This is Large ribosomal subunit protein bL31B from Pseudomonas aeruginosa (strain LESB58).